Reading from the N-terminus, the 197-residue chain is uncharacterized protein (197 aa).

This is an uncharacterized protein from Acanthamoeba polyphaga (Amoeba).